The sequence spans 220 residues: MSKKDGYLEFFSYFNISEEKFINFAKESIIFIKQEKAKQEWDILKSKILNEKENVYVRNFGRNGQGGHLYQEVYKQLFLANIIVDPSNNNYPTKLLEKSVGLVKNKNLYNYQVSHIFGLTKNPYAFCAPWNIVFIPKILDPFTGHESKGEITEKITAMYRRLMWDKYEDLISDYNKIMEKYREVIKSEIEKYKALSKRKNDIYSRFIESVNIEFNVIEKI.

A coiled-coil region spans residues 165 to 202; it reads DKYEDLISDYNKIMEKYREVIKSEIEKYKALSKRKNDI.

This is an uncharacterized protein from Pasteurella multocida (strain Pm70).